The following is a 363-amino-acid chain: UDP-N-acetylglucosamine--N-acetylmuramyl-(pentapeptide) pyrophosphoryl-undecaprenol N-acetylglucosamine transferase (363 aa).

Residues 12–14, S196, and Q291 each bind UDP-N-acetyl-alpha-D-glucosamine; that span reads TAG.

This sequence belongs to the glycosyltransferase 28 family. MurG subfamily.

The protein localises to the cell inner membrane. The catalysed reaction is di-trans,octa-cis-undecaprenyl diphospho-N-acetyl-alpha-D-muramoyl-L-alanyl-D-glutamyl-meso-2,6-diaminopimeloyl-D-alanyl-D-alanine + UDP-N-acetyl-alpha-D-glucosamine = di-trans,octa-cis-undecaprenyl diphospho-[N-acetyl-alpha-D-glucosaminyl-(1-&gt;4)]-N-acetyl-alpha-D-muramoyl-L-alanyl-D-glutamyl-meso-2,6-diaminopimeloyl-D-alanyl-D-alanine + UDP + H(+). It functions in the pathway cell wall biogenesis; peptidoglycan biosynthesis. In terms of biological role, cell wall formation. Catalyzes the transfer of a GlcNAc subunit on undecaprenyl-pyrophosphoryl-MurNAc-pentapeptide (lipid intermediate I) to form undecaprenyl-pyrophosphoryl-MurNAc-(pentapeptide)GlcNAc (lipid intermediate II). The polypeptide is UDP-N-acetylglucosamine--N-acetylmuramyl-(pentapeptide) pyrophosphoryl-undecaprenol N-acetylglucosamine transferase (Legionella pneumophila (strain Corby)).